The sequence spans 223 residues: Phosphoribosylformylglycinamidine synthase subunit PurQ (223 aa).

The Glutamine amidotransferase type-1 domain occupies 4–223 (FAVVVFPGTN…FRSMVEWARK (220 aa)). The active-site Nucleophile is the C85. Residues H196 and E198 contribute to the active site.

In terms of assembly, part of the FGAM synthase complex composed of 1 PurL, 1 PurQ and 2 PurS subunits.

It is found in the cytoplasm. It carries out the reaction N(2)-formyl-N(1)-(5-phospho-beta-D-ribosyl)glycinamide + L-glutamine + ATP + H2O = 2-formamido-N(1)-(5-O-phospho-beta-D-ribosyl)acetamidine + L-glutamate + ADP + phosphate + H(+). It catalyses the reaction L-glutamine + H2O = L-glutamate + NH4(+). Its pathway is purine metabolism; IMP biosynthesis via de novo pathway; 5-amino-1-(5-phospho-D-ribosyl)imidazole from N(2)-formyl-N(1)-(5-phospho-D-ribosyl)glycinamide: step 1/2. In terms of biological role, part of the phosphoribosylformylglycinamidine synthase complex involved in the purines biosynthetic pathway. Catalyzes the ATP-dependent conversion of formylglycinamide ribonucleotide (FGAR) and glutamine to yield formylglycinamidine ribonucleotide (FGAM) and glutamate. The FGAM synthase complex is composed of three subunits. PurQ produces an ammonia molecule by converting glutamine to glutamate. PurL transfers the ammonia molecule to FGAR to form FGAM in an ATP-dependent manner. PurS interacts with PurQ and PurL and is thought to assist in the transfer of the ammonia molecule from PurQ to PurL. This is Phosphoribosylformylglycinamidine synthase subunit PurQ from Thermococcus kodakarensis (strain ATCC BAA-918 / JCM 12380 / KOD1) (Pyrococcus kodakaraensis (strain KOD1)).